The following is a 156-amino-acid chain: AP-1 complex subunit sigma-1 (156 aa).

Belongs to the adaptor complexes small subunit family. Adaptor protein complex 1 (AP-1) is a heterotetramer composed of two large adaptins (gamma-type subunit and beta-type subunit), a medium adaptin (mu-type subunit) and a small adaptin (sigma-type subunit).

It is found in the golgi apparatus. It localises to the trans-Golgi network. The protein resides in the cytoplasmic vesicle. The protein localises to the clathrin-coated vesicle membrane. Its function is as follows. Subunit of clathrin-associated adaptor protein complex 1 that plays a role in protein sorting in the trans-Golgi network (TGN) and endosomes. The AP complexes mediate the recruitment of clathrin to membranes and the recognition of sorting signals within the cytosolic tails of transmembrane cargo molecules. Also involved in early steps of phagocytosis and macropinocytosis. The protein is AP-1 complex subunit sigma-1 (ap1s1) of Dictyostelium discoideum (Social amoeba).